The chain runs to 176 residues: Ribosome maturation factor RimM (176 aa).

The region spanning 93-170 is the PRC barrel domain; sequence DGEYYHADLI…ELPTEIEGDT (78 aa).

The protein belongs to the RimM family. As to quaternary structure, binds ribosomal protein uS19.

It is found in the cytoplasm. Its function is as follows. An accessory protein needed during the final step in the assembly of 30S ribosomal subunit, possibly for assembly of the head region. Essential for efficient processing of 16S rRNA. May be needed both before and after RbfA during the maturation of 16S rRNA. It has affinity for free ribosomal 30S subunits but not for 70S ribosomes. In Rhodopseudomonas palustris (strain BisB5), this protein is Ribosome maturation factor RimM.